Reading from the N-terminus, the 481-residue chain is tRNA:m(4)X modification enzyme TRM13 homolog (481 aa).

A CHHC U11-48K-type zinc finger spans residues 56 to 83 (RILCPLDPKHTVYEDQLAKHLKKCNSRE). Cys59, His65, His75, and Cys79 together coordinate Zn(2+). Residues 113–140 (SLSEEQLENLIKKLRKASEGLNSTHEDH) adopt a coiled-coil conformation. Disordered stretches follow at residues 296-319 (AKRIKNDKTEKESNTLAKEGSEKD) and 379-414 (LEGSDVTPERKDAQRDENEEHDDGGDRLTDGNTDSL). Residues 385-407 (TPERKDAQRDENEEHDDGGDRLT) are compositionally biased toward basic and acidic residues.

This sequence belongs to the methyltransferase TRM13 family.

The enzyme catalyses cytidine(4) in tRNA(Pro) + S-adenosyl-L-methionine = 2'-O-methylcytidine(4) in tRNA(Pro) + S-adenosyl-L-homocysteine + H(+). The catalysed reaction is cytidine(4) in tRNA(Gly)(GCC) + S-adenosyl-L-methionine = 2'-O-methylcytidine(4) in tRNA(Gly)(GCC) + S-adenosyl-L-homocysteine + H(+). It carries out the reaction adenosine(4) in tRNA(His) + S-adenosyl-L-methionine = 2'-O-methyladenosine(4) in tRNA(His) + S-adenosyl-L-homocysteine + H(+). In terms of biological role, tRNA methylase which 2'-O-methylates cytidine(4) in tRNA(Pro) and tRNA(Gly)(GCC), and adenosine(4) in tRNA(His). In Mus musculus (Mouse), this protein is tRNA:m(4)X modification enzyme TRM13 homolog (Trmt13).